The primary structure comprises 33 residues: uncharacterized protein (33 aa).

Residues 1 to 33 (MQPGTGLSFDISQILKQGSDPKQKLPERQAIVL) form a disordered region.

This is an uncharacterized protein from Caenorhabditis elegans.